The sequence spans 859 residues: Homeobox-leucine zipper protein HOX32 (859 aa).

Residues 7–31 (AAVHGVGRQDRSSPGGGGAPQVDTG) form a disordered region. The segment at residues 29–92 (DTGKYVRYTP…NRRCREKQRK (64 aa)) is a DNA-binding region (homeobox). The stretch at 100–129 (VNRKLTAMNKLLMEENDRLQKQVSRLVYEN) forms a coiled coil. A compositionally biased stretch (polar residues) spans 146-164 (TSCESVVTSGQHHQQQNPA). Residues 146-172 (TSCESVVTSGQHHQQQNPAATRPQRDA) form a disordered region. An START domain is found at 171–393 (DANNPAGLLA…LRHIRQIAHE (223 aa)).

It belongs to the HD-ZIP homeobox family. Class III subfamily. As to expression, expressed in seedlings, roots, stems, leaf sheaths and blades and panicles.

Its subcellular location is the nucleus. Probable transcription factor. The sequence is that of Homeobox-leucine zipper protein HOX32 (HOX32) from Oryza sativa subsp. indica (Rice).